A 146-amino-acid polypeptide reads, in one-letter code: 3-hydroxyacyl-[acyl-carrier-protein] dehydratase FabZ (146 aa).

H49 is a catalytic residue.

It belongs to the thioester dehydratase family. FabZ subfamily.

It is found in the cytoplasm. The enzyme catalyses a (3R)-hydroxyacyl-[ACP] = a (2E)-enoyl-[ACP] + H2O. Its function is as follows. Involved in unsaturated fatty acids biosynthesis. Catalyzes the dehydration of short chain beta-hydroxyacyl-ACPs and long chain saturated and unsaturated beta-hydroxyacyl-ACPs. This is 3-hydroxyacyl-[acyl-carrier-protein] dehydratase FabZ from Psychrobacter arcticus (strain DSM 17307 / VKM B-2377 / 273-4).